The chain runs to 303 residues: Protoporphyrin uptake protein 1 (303 aa).

Residues 1–18 are Extracellular-facing; it reads MSTTDSGFVLYHYTPSKA. A helical transmembrane segment spans residues 19–39; sequence AAIVFVVLFIIMTVIFAVQTL. At 40-76 the chain is on the cytoplasmic side; sequence YAARKSSKALKNNPFESSDDKVDSLEDAEYKQLKITP. A helical membrane pass occupies residues 77–97; it reads TVFAFIPFFTGCIMEAVGYIG. The Extracellular segment spans residues 98 to 111; sequence RALSSSNPERTTPY. A helical membrane pass occupies residues 112-132; that stretch reads IIQSVLLLVAPALIAATIYMI. Residues 133–154 lie on the Cytoplasmic side of the membrane; the sequence is FGRLLHVMRCQSLILISARFGT. The chain crosses the membrane as a helical span at residues 155–175; that stretch reads TFFVVGDVFSFFLQAAGGGLM. The Extracellular segment spans residues 176–183; sequence SKAGSTKT. The helical transmembrane segment at 184–204 threads the bilayer; sequence GSGLITAGLFVQVIFFGFFII. Over 205–226 the chain is Cytoplasmic; that stretch reads NEIRFTVNVKRRCLFYEDISRK. Residues 227–247 traverse the membrane as a helical segment; sequence WIFVNATLLLSSMLILLRSIV. Topologically, residues 248–264 are extracellular; it reads RIVEFIQGFNGYIISHE. The helical transmembrane segment at 265–285 threads the bilayer; it reads YFIYVFDAVPMLLVIIAFSVG. At 286 to 303 the chain is on the cytoplasmic side; that stretch reads SFFGNVFDVIKECQTLSN.

Belongs to the lipid-translocating exporter (LTE) (TC 9.A.26.1) family. N-glycosylated.

Its subcellular location is the cell membrane. In terms of biological role, involved in inducible protoporphyrin IX influx and heme efflux. This chain is Protoporphyrin uptake protein 1 (PUG1), found in Saccharomyces cerevisiae (strain ATCC 204508 / S288c) (Baker's yeast).